Consider the following 861-residue polypeptide: Protein argonaute-3 (861 aa).

Methionine 1 carries the post-translational modification N-acetylmethionine. The 120-residue stretch at 230–349 (PVIQFMCEVL…LPLEVCNIVA (120 aa)) folds into the PAZ domain. Positions 518–820 (LIIVILPGKT…VAFRARYHLV (303 aa)) constitute a Piwi domain. The interaction with guide RNA stretch occupies residues 530–567 (YAEVKRVGDTLLGMATQCVQVKNVIKTSPQTLSNLCLK). Residues aspartate 598, glutamate 638, and aspartate 670 each coordinate a divalent metal cation. An interaction with guide RNA region spans residues 758–806 (QGTSRPSHYHVLWDDNCFTADELQLLTYQPSAHTYVHCTRSVSIPAPAY). Histidine 809 contributes to the a divalent metal cation binding site. The interval 824-847 (RDSAEGSHVSGQSNGRDPQALAKA) is disordered. The residue at position 826 (serine 826) is a Phosphoserine.

This sequence belongs to the argonaute family. Ago subfamily. As to quaternary structure, interacts with EIF4B, IMP8, PRMT5 and TNRC6B. Interacts with APOBEC3F, APOBEC3G and APOBEC3H. Interacts with EDC4. Ubiquitinated on surface-exposed lysines by a SCF-like E3 ubiquitin-protein ligase complex containing ZSWIM8 during target-directed microRNA degradation (TDMD), a process that mediates degradation of microRNAs (miRNAs). Ubiquitination by the SCF-like E3 ubiquitin-protein ligase complex containing ZSWIM8 leads to its subsequent degradation, thereby exposing miRNAs for degradation. ZSWIM8 recognizes and binds AGO3 when it is engaged with a TDMD target.

It is found in the cytoplasm. The protein resides in the P-body. The catalysed reaction is Endonucleolytic cleavage to 5'-phosphomonoester.. In terms of biological role, required for RNA-mediated gene silencing (RNAi). Binds to short RNAs such as microRNAs (miRNAs) and represses the translation of mRNAs which are complementary to them. Proposed to be involved in stabilization of small RNA derivates (siRNA) derived from processed RNA polymerase III-transcribed Alu repeats containing a DR2 retinoic acid response element (RARE) in stem cells and in the subsequent siRNA-dependent degradation of a subset of RNA polymerase II-transcribed coding mRNAs by recruiting a mRNA decapping complex involving EDC4. Possesses RNA slicer activity but only on select RNAs bearing 5'- and 3'-flanking sequences to the region of guide-target complementarity. In Bos taurus (Bovine), this protein is Protein argonaute-3 (AGO3).